The chain runs to 221 residues: Oxaloacetate tautomerase FAHD1, mitochondrial (221 aa).

A mitochondrion-targeting transit peptide spans 1–24 (MASTKPLSRFWEWGKNIVCVGRNY). Position 22 (arginine 22) interacts with oxalate. Phosphoserine is present on serine 37. Glutamate 68, glutamate 70, and aspartate 99 together coordinate Mg(2+). An N6-acetyllysine modification is found at lysine 110. The residue at position 112 (lysine 112) is an N6-succinyllysine. Lysine 120 contributes to the oxalate binding site.

Belongs to the FAH family. In terms of assembly, homodimer. The cofactor is Mg(2+). Requires Mn(2+) as cofactor. As to expression, ubiquitous with higher expression in the liver and the kidney (at protein level).

It is found in the mitochondrion. The protein localises to the cytoplasm. The protein resides in the cytosol. It carries out the reaction oxaloacetate = enol-oxaloacetate. The enzyme catalyses oxaloacetate + H(+) = pyruvate + CO2. It catalyses the reaction a 3-acylpyruvate + H2O = a carboxylate + pyruvate + H(+). The catalysed reaction is acetylpyruvate + H2O = acetate + pyruvate + H(+). It carries out the reaction 3-fumarylpyruvate + H2O = fumarate + pyruvate + H(+). Its activity is regulated as follows. Oxaloacetate decarboxylation is potently and competitively inhibited by oxalate. In terms of biological role, tautomerase that converts enol-oxaloacetate, a strong inhibitor of succinate dehydrogenase, to the physiological keto form of oxaloacetate. It is thereby required to maximize aerobic respiration efficiency by preventing succinate dehydrogenase inhibition. Also acts as a weak oxaloacetate decarboxylase (ODx), catalyzing the decarboxylation of oxaloacetate (OAA) to pyruvate and CO(2), and as such is likely a regulatory enzyme in the TCA cycle. Also displays acylpyruvase activity, being able to hydrolyze acetylpyruvate and fumarylpyruvate in vitro. In Mus musculus (Mouse), this protein is Oxaloacetate tautomerase FAHD1, mitochondrial.